The primary structure comprises 467 residues: Fumarate hydratase class II (467 aa).

Substrate-binding positions include 98-100 (SGT), Arg-126, 129-132 (HPND), 139-141 (SSN), and Thr-187. His-188 serves as the catalytic Proton donor/acceptor. Ser-318 is a catalytic residue. Substrate is bound by residues Ser-319 and 324-326 (KVN).

The protein belongs to the class-II fumarase/aspartase family. Fumarase subfamily. As to quaternary structure, homotetramer.

The protein localises to the cytoplasm. The catalysed reaction is (S)-malate = fumarate + H2O. It participates in carbohydrate metabolism; tricarboxylic acid cycle; (S)-malate from fumarate: step 1/1. In terms of biological role, involved in the TCA cycle. Catalyzes the stereospecific interconversion of fumarate to L-malate. The polypeptide is Fumarate hydratase class II (Salmonella typhi).